The following is a 612-amino-acid chain: MLIPHYLHQLQLCARNRTLTTAKALHAHIVKLGIVQCCPLANTLVNVYGKCGAASHALQVFDEMPHRDHIAWASVLTALNQANLSGKTLSVFSSVGSSSGLRPDDFVFSALVKACANLGSIDHGRQVHCHFIVSEYANDEVVKSSLVDMYAKCGLLNSAKAVFDSIRVKNTISWTAMVSGYAKSGRKEEALELFRILPVKNLYSWTALISGFVQSGKGLEAFSVFTEMRRERVDILDPLVLSSIVGACANLAASIAGRQVHGLVIALGFDSCVFISNALIDMYAKCSDVIAAKDIFSRMRHRDVVSWTSLIVGMAQHGQAEKALALYDDMVSHGVKPNEVTFVGLIYACSHVGFVEKGRELFQSMTKDYGIRPSLQHYTCLLDLLGRSGLLDEAENLIHTMPFPPDEPTWAALLSACKRQGRGQMGIRIADHLVSSFKLKDPSTYILLSNIYASASLWGKVSEARRKLGEMEVRKDPGHSSVEVRKETEVFYAGETSHPLKEDIFRLLKKLEEEMRIRNGYVPDTSWILHDMDEQEKEKLLFWHSERSAVAYGLLKAVPGTPIRIVKNLRVCGDCHVVLKHISEITEREIIVRDATRYHHFKGGKCSCNDFW.

The transit peptide at 1-24 directs the protein to the mitochondrion; it reads MLIPHYLHQLQLCARNRTLTTAKA. PPR repeat units follow at residues 37 to 71, 72 to 103, 104 to 138, 139 to 169, 170 to 204, 205 to 235, 237 to 271, 272 to 302, 303 to 337, 338 to 373, and 374 to 408; these read CCPLANTLVNVYGKCGAASHALQVFDEMPHRDHIA, WASVLTALNQANLSGKTLSVFSSVGSSSGLRP, DDFVFSALVKACANLGSIDHGRQVHCHFIVSEYAN, DEVVKSSLVDMYAKCGLLNSAKAVFDSIRVK, NTISWTAMVSGYAKSGRKEEALELFRILPVKNLYS, WTALISGFVQSGKGLEAFSVFTEMRRERVDI, DPLVLSSIVGACANLAASIAGRQVHGLVIALGFDS, CVFISNALIDMYAKCSDVIAAKDIFSRMRHR, DVVSWTSLIVGMAQHGQAEKALALYDDMVSHGVKP, NEVTFVGLIYACSHVGFVEKGRELFQSMTKDYGIRP, and SLQHYTCLLDLLGRSGLLDEAENLIHTMPFPPDEP. The type E motif stretch occupies residues 409 to 485; the sequence is TWAALLSACK…DPGHSSVEVR (77 aa). Positions 486-516 are type E(+) motif; sequence KETEVFYAGETSHPLKEDIFRLLKKLEEEMR. The type DYW motif stretch occupies residues 518-612; sequence RNGYVPDTSW…GGKCSCNDFW (95 aa).

The protein belongs to the PPR family. PCMP-H subfamily. As to quaternary structure, interacts with MORF8/RIP1 and MORF1/RIP8.

The protein localises to the mitochondrion. In terms of biological role, involved in C-to-U editing of mitochondrial RNA. Required specifically for editing the mitochondrial NAD4, MT-CYB/COB and RPL16 transcripts. This Arabidopsis thaliana (Mouse-ear cress) protein is Pentatricopeptide repeat-containing protein At4g14050, mitochondrial (PCMP-H13).